Here is a 66-residue protein sequence, read N- to C-terminus: Hemicalcin (66 aa).

Positions 1–21 (MRASLFIVIFVVSFITISCLS) are cleaved as a signal peptide. Residues 22–33 (TDDEEARWIEKR) constitute a propeptide that is removed on maturation. 3 disulfides stabilise this stretch: cysteine 36–cysteine 50, cysteine 43–cysteine 54, and cysteine 49–cysteine 65. The segment at 55 to 57 (KRR) is essential for stimulation of [3H]ryanodine binding to RYR1.

It belongs to the scorpion calcin family. Expressed by the venom gland.

The protein resides in the secreted. This toxin stabilizes ryanodine receptor 1 (RyR1) opening in a long-lasting subconductance state (20% and 38% of the full conductance state have been found). It promotes an increase in the opening probability at intermediate concentration. Furthermore, it triggers calcium release from sarcoplasmic vesicles (68 nM are enough to induce a sharp release, and 45% of the total calcium is released after toxin (100 nM) addition) probably by acting as a cell-penetrating peptide (CPP). In addition, it has been shown to dose-dependently stimulate ryanodine binding to RyR1 (EC(50)=6.9-71 nM). It also augments the bell-shaped calcium-[3H]ryanodine binding curve that is maximal at about 10 uM calcium concentration. It binds a different site as ryanodine. It acts synergistically with caffeine. In vivo, intracerebroventricular injection into mice induces neurotoxic symptoms, followed by death. In Hemiscorpius lepturus (Scorpion), this protein is Hemicalcin.